A 382-amino-acid polypeptide reads, in one-letter code: Anhydro-N-acetylmuramic acid kinase (382 aa).

9 to 16 (GTSLDGID) contributes to the ATP binding site.

It belongs to the anhydro-N-acetylmuramic acid kinase family.

It carries out the reaction 1,6-anhydro-N-acetyl-beta-muramate + ATP + H2O = N-acetyl-D-muramate 6-phosphate + ADP + H(+). It functions in the pathway amino-sugar metabolism; 1,6-anhydro-N-acetylmuramate degradation. The protein operates within cell wall biogenesis; peptidoglycan recycling. Its function is as follows. Catalyzes the specific phosphorylation of 1,6-anhydro-N-acetylmuramic acid (anhMurNAc) with the simultaneous cleavage of the 1,6-anhydro ring, generating MurNAc-6-P. Is required for the utilization of anhMurNAc either imported from the medium or derived from its own cell wall murein, and thus plays a role in cell wall recycling. This chain is Anhydro-N-acetylmuramic acid kinase, found in Bacillus thuringiensis subsp. konkukian (strain 97-27).